Reading from the N-terminus, the 154-residue chain is Histone H2B type F-M (154 aa).

Residues 1-18 (MAAASAMAEASSETTSEE) show a composition bias toward low complexity. The disordered stretch occupies residues 1-61 (MAAASAMAEA…RGDSFGDSFT (61 aa)). Over residues 34–50 (QKQKRRGCRGSRRRHAN) the composition is skewed to basic residues.

This sequence belongs to the histone H2B family. In terms of assembly, the nucleosome is a histone octamer containing two molecules each of H2A, H2B, H3 and H4 assembled in one H3-H4 heterotetramer and two H2A-H2B heterodimers. The octamer wraps approximately 147 bp of DNA.

The protein resides in the nucleus. Its subcellular location is the chromosome. Functionally, core component of nucleosome. Nucleosomes wrap and compact DNA into chromatin, limiting DNA accessibility to the cellular machineries which require DNA as a template. Histones thereby play a central role in transcription regulation, DNA repair, DNA replication and chromosomal stability. DNA accessibility is regulated via a complex set of post-translational modifications of histones, also called histone code, and nucleosome remodeling. The polypeptide is Histone H2B type F-M (Homo sapiens (Human)).